A 98-amino-acid chain; its full sequence is Ferredoxin-like protein (98 aa).

The 4Fe-4S ferredoxin-type domain occupies 57-87; sequence GQVEVTVDGCIECGTCRVIAEPTGDIEWSHP.

To ferredoxins from P.putida and C.tartarivorum, ferredoxin I from A.vinelandii, ferredoxin II from D.desulfuricans.

Its function is as follows. Could be a 3Fe-4S cluster-containing protein. In Bradyrhizobium diazoefficiens (strain JCM 10833 / BCRC 13528 / IAM 13628 / NBRC 14792 / USDA 110), this protein is Ferredoxin-like protein (fixX).